Consider the following 619-residue polypeptide: Keratin, type II cytoskeletal 1 (619 aa).

The segment at 1 to 180 (MSRHFSSRSG…DPEIQKVKTR (180 aa)) is head. Position 12 is an omega-N-methylarginine (Arg-12). Phosphoserine is present on residues Ser-18 and Ser-21. Residues 28–49 (QRRTTSSSVRHSGGGGGRFSGG) form a disordered region. Residues 39–49 (SGGGGGRFSGG) show a composition bias toward gly residues. Arg-45 is subject to Omega-N-methylarginine. Residue Ser-68 is modified to Phosphoserine. The stretch at 173-477 (EIQKVKTRER…ELMNTKLALD (305 aa)) forms a coiled coil. The coil 1A stretch occupies residues 181–216 (EREQIKSLNNQFASFIDKVRFLEQQNQVLQTKWELL). An IF rod domain is found at 181–494 (EREQIKSLNN…TLLEGEESRM (314 aa)). The segment at 217–235 (QQVDTSTRTHSLEPYFENY) is linker 1. A coil 1B region spans residues 236 to 327 (ISNLRRRVDQ…TLYQAELSQM (92 aa)). Lys-277 carries the post-translational modification N6,N6-dimethyllysine. The linker 12 stretch occupies residues 328-351 (QTQISETNVILSMDNNRSLDLDSI). A Phosphoserine modification is found at Ser-345. The coil 2 stretch occupies residues 352–490 (ISEVKAQYEE…ATYRTLLEGE (139 aa)). Residues 491–619 (ESRMSGECAP…VSTSYSRAVR (129 aa)) are tail. 2 positions are modified to omega-N-methylarginine: Arg-519 and Arg-575. Positions 559 to 619 (GGGGGGYGSS…VSTSYSRAVR (61 aa)) are disordered. The segment covering 573 to 595 (GHRGGSGGGSRSGGSSGGRGSSS) has biased composition (gly residues). Over residues 596-606 (GGIKTSSGSSS) the composition is skewed to low complexity. The segment covering 607-619 (VKFVSTSYSRAVR) has biased composition (polar residues).

Belongs to the intermediate filament family. In terms of assembly, heterotetramer of two type I and two type II keratins. Heterodimer with KRT10. Two heterodimers of KRT1 and KRT10 form a heterotetramer. Forms a heterodimer with KRT14; the interaction is more abundant in the absence of KRT5. Interacts with ITGB1 in the presence of RACK1 and SRC, and with RACK1. Interacts with C1QBP; the association represents a cell surface kininogen receptor. Interacts with EPPK1; interaction is dependent of higher-order structure of intermediate filament. In terms of processing, undergoes deimination of some arginine residues (citrullination).

The protein resides in the cell membrane. It localises to the cytoplasm. Its function is as follows. May regulate the activity of kinases such as PKC and SRC via binding to integrin beta-1 (ITB1) and the receptor of activated protein C kinase 1 (RACK1). In complex with C1QBP is a high affinity receptor for kininogen-1/HMWK. The sequence is that of Keratin, type II cytoskeletal 1 from Canis lupus familiaris (Dog).